The primary structure comprises 467 residues: Replication factor C large subunit (467 aa).

Position 47–54 (47–54) interacts with ATP; that stretch reads GPPGVGKT.

It belongs to the activator 1 small subunits family. RfcL subfamily. As to quaternary structure, heteromultimer composed of small subunits (RfcS) and large subunits (RfcL).

Functionally, part of the RFC clamp loader complex which loads the PCNA sliding clamp onto DNA. This Methanothrix thermoacetophila (strain DSM 6194 / JCM 14653 / NBRC 101360 / PT) (Methanosaeta thermophila) protein is Replication factor C large subunit.